The sequence spans 144 residues: Ribosomal RNA large subunit methyltransferase H (144 aa).

S-adenosyl-L-methionine contacts are provided by residues Leu63, Gly92, and 111–116 (LSAMTL).

Belongs to the RNA methyltransferase RlmH family. Homodimer.

It is found in the cytoplasm. It carries out the reaction pseudouridine(1915) in 23S rRNA + S-adenosyl-L-methionine = N(3)-methylpseudouridine(1915) in 23S rRNA + S-adenosyl-L-homocysteine + H(+). Specifically methylates the pseudouridine at position 1915 (m3Psi1915) in 23S rRNA. The polypeptide is Ribosomal RNA large subunit methyltransferase H (Prochlorococcus marinus (strain MIT 9313)).